A 156-amino-acid polypeptide reads, in one-letter code: Small ribosomal subunit protein uS7 (156 aa).

Belongs to the universal ribosomal protein uS7 family. In terms of assembly, part of the 30S ribosomal subunit. Contacts proteins S9 and S11.

In terms of biological role, one of the primary rRNA binding proteins, it binds directly to 16S rRNA where it nucleates assembly of the head domain of the 30S subunit. Is located at the subunit interface close to the decoding center, probably blocks exit of the E-site tRNA. In Frankia alni (strain DSM 45986 / CECT 9034 / ACN14a), this protein is Small ribosomal subunit protein uS7.